The following is a 432-amino-acid chain: ATP-dependent RNA helicase RhlB (432 aa).

The short motif at 9–37 is the Q motif element; it reads QRFADLPLHAEVIQALNENGFEFCTPIQA. Residues 40–219 form the Helicase ATP-binding domain; the sequence is LPVLLKAKDI…YDHMNDPEKV (180 aa). Residue 53–60 participates in ATP binding; the sequence is AQTGTGKT. Residues 165-168 carry the DEAD box motif; the sequence is DEAD. Residues 243–390 form the Helicase C-terminal domain; that stretch reads KMRLLLTLME…VSRYDREALL (148 aa). Residues 395 to 432 are disordered; that stretch reads TPVKIHRKHPTSRTRDGAKGAHRSGGARPPRHRTRRPS. The span at 423 to 432 shows a compositional bias: basic residues; it reads PPRHRTRRPS.

This sequence belongs to the DEAD box helicase family. RhlB subfamily. Component of the RNA degradosome, which is a multiprotein complex involved in RNA processing and mRNA degradation.

It localises to the cytoplasm. The enzyme catalyses ATP + H2O = ADP + phosphate + H(+). Its function is as follows. DEAD-box RNA helicase involved in RNA degradation. Has RNA-dependent ATPase activity and unwinds double-stranded RNA. In Shewanella denitrificans (strain OS217 / ATCC BAA-1090 / DSM 15013), this protein is ATP-dependent RNA helicase RhlB.